The primary structure comprises 503 residues: Lycopene beta cyclase, chloroplastic/chromoplastic (503 aa).

A chloroplast and chromoplast-targeting transit peptide spans 1-85; that stretch reads MDTLLRTHNR…DLPLYDPSKA (85 aa). 90–117 contributes to the NAD(+) binding site; the sequence is LAVVGGGPLARSCSTSLGGGLSVVSIDP.

It belongs to the lycopene cyclase family.

It localises to the plastid. The protein localises to the chloroplast. Its subcellular location is the chromoplast. The protein resides in the chromoplast membrane. It is found in the chloroplast membrane. The enzyme catalyses a carotenoid psi-end group = a carotenoid beta-end derivative. It participates in carotenoid biosynthesis; beta-carotene biosynthesis. It functions in the pathway carotenoid biosynthesis; beta-zeacarotene biosynthesis. Functionally, catalyzes the double cyclization reaction which converts lycopene to beta-carotene and neurosporene to beta-zeacarotene. This Narcissus pseudonarcissus (Daffodil) protein is Lycopene beta cyclase, chloroplastic/chromoplastic (LCY1).